Here is a 355-residue protein sequence, read N- to C-terminus: Nuclear speckle splicing regulatory protein 1 homolog (355 aa).

Residues 1 to 57 form a disordered region; the sequence is MSGTGFRYGLNVMKKKKPNESSNRITFTEDDSSSSEQEHAPIPNSFSSQITAASDAS. The span at 44–54 shows a compositional bias: polar residues; the sequence is NSFSSQITAAS. Positions 99-162 form a coiled coil; it reads MENLIESAKK…EDRKEEDEKS (64 aa). 2 disordered regions span residues 253-292 and 325-355; these read SANN…HGTY and KIHA…ATNP. Basic and acidic residues predominate over residues 280-289; the sequence is YHQDRPDKRH. A coiled-coil region spans residues 293–326; that stretch reads SLEEIDKQRKEFENRQRLQKEKEFQKSREAALKI. Positions 329–339 are enriched in polar residues; sequence SRNTTETQVQS. A compositionally biased stretch (basic residues) spans 346–355; sequence QRKKKAATNP.

This sequence belongs to the NSRP1 family.

This Schizosaccharomyces pombe (strain 972 / ATCC 24843) (Fission yeast) protein is Nuclear speckle splicing regulatory protein 1 homolog.